A 355-amino-acid polypeptide reads, in one-letter code: Adenine deaminase (355 aa).

Residues histidine 23, histidine 25, and histidine 211 each contribute to the Zn(2+) site. Residue glutamate 214 is the Proton donor of the active site. Position 292 (aspartate 292) interacts with Zn(2+). Aspartate 293 is a binding site for substrate.

The protein belongs to the metallo-dependent hydrolases superfamily. Adenosine and AMP deaminases family. Adenine deaminase type 2 subfamily. Requires Zn(2+) as cofactor.

Its subcellular location is the cytoplasm. The protein localises to the nucleus. The catalysed reaction is adenine + H2O + H(+) = hypoxanthine + NH4(+). Its function is as follows. Catalyzes the hydrolytic deamination of adenine to hypoxanthine. Plays an important role in the purine salvage pathway and in nitrogen catabolism. This is Adenine deaminase from Kluyveromyces lactis (strain ATCC 8585 / CBS 2359 / DSM 70799 / NBRC 1267 / NRRL Y-1140 / WM37) (Yeast).